Here is a 213-residue protein sequence, read N- to C-terminus: Ras-related protein Rab-25 (213 aa).

Positions 21, 24, 25, 26, 27, 38, 39, 43, and 44 each coordinate GTP. Thr26 lines the Mg(2+) pocket. 2 consecutive short sequence motifs (switch) follow at residues 35–49 and 67–84; these read NEFSHDSRTTIGVEF and DTAGLERYRAITSAYYRG. Positions 44 and 67 each coordinate Mg(2+). Positions 70, 125, 126, 128, 156, and 157 each coordinate GTP. 2 S-geranylgeranyl cysteine lipidation sites follow: Cys209 and Cys210. At Cys210 the chain carries Cysteine methyl ester. The propeptide at 211-213 is removed in mature form; sequence ISL.

Belongs to the small GTPase superfamily. Rab family. Interacts (GTP-bound form) with RAB11FIP1, RAB11FIP2, RAB11FIP3 and RAB11FIP4. Interacts (via the hypervariable C-terminal region) with ITGB1 (via the cytoplasmic region); the interaction is GTP-dependent. Interacts with ITGAV. Associates with the integrin alpha-V/beta-1 heterodimer. Interacts with VPS33B. Mg(2+) serves as cofactor. In terms of tissue distribution, expression is restricted to epithelial cells. Expressed in ovarian epithelium (NOE) and breast tissue. Expressed in ovarian cancer; expression is increased relative to NOE cells. Expression in ovarian cancer is stage dependent, with stage III and stage IV showing higher levels than early stage cancers. Expressed in breast cancer; expression is increased relative to normal breast tissue.

The protein localises to the cell membrane. The protein resides in the cytoplasmic vesicle. Its subcellular location is the cell projection. It is found in the pseudopodium membrane. It carries out the reaction GTP + H2O = GDP + phosphate + H(+). Its activity is regulated as follows. Regulated by guanine nucleotide exchange factors (GEFs) which promote the exchange of bound GDP for free GTP. Regulated by GTPase activating proteins (GAPs) which increase the GTP hydrolysis activity. Inhibited by GDP dissociation inhibitors (GDIs) which prevent Rab-GDP dissociation. The small GTPases Rab are key regulators of intracellular membrane trafficking, from the formation of transport vesicles to their fusion with membranes. Rabs cycle between an inactive GDP-bound form and an active GTP-bound form that is able to recruit to membranes different set of downstream effectors directly responsible for vesicle formation, movement, tethering and fusion. RAB25 regulates epithelial cell differentiation, proliferation and survival, thereby playing key roles in tumorigenesis. Promotes invasive migration of cells in which it functions to localize and maintain integrin alpha-V/beta-1 at the tips of extending pseudopodia. Involved in the regulation of epithelial morphogenesis through the control of CLDN4 expression and localization at tight junctions. May selectively regulate the apical recycling pathway. Together with MYO5B regulates transcytosis. This is Ras-related protein Rab-25 from Homo sapiens (Human).